Here is a 286-residue protein sequence, read N- to C-terminus: Phosphoribosylaminoimidazole-succinocarboxamide synthase (286 aa).

The protein belongs to the SAICAR synthetase family.

The enzyme catalyses 5-amino-1-(5-phospho-D-ribosyl)imidazole-4-carboxylate + L-aspartate + ATP = (2S)-2-[5-amino-1-(5-phospho-beta-D-ribosyl)imidazole-4-carboxamido]succinate + ADP + phosphate + 2 H(+). The protein operates within purine metabolism; IMP biosynthesis via de novo pathway; 5-amino-1-(5-phospho-D-ribosyl)imidazole-4-carboxamide from 5-amino-1-(5-phospho-D-ribosyl)imidazole-4-carboxylate: step 1/2. The chain is Phosphoribosylaminoimidazole-succinocarboxamide synthase from Actinobacillus succinogenes (strain ATCC 55618 / DSM 22257 / CCUG 43843 / 130Z).